We begin with the raw amino-acid sequence, 311 residues long: Homoserine kinase (311 aa).

88 to 98 (PEGLGLGSSGA) is an ATP binding site.

This sequence belongs to the GHMP kinase family. Homoserine kinase subfamily.

The protein resides in the cytoplasm. The catalysed reaction is L-homoserine + ATP = O-phospho-L-homoserine + ADP + H(+). It functions in the pathway amino-acid biosynthesis; L-threonine biosynthesis; L-threonine from L-aspartate: step 4/5. Functionally, catalyzes the ATP-dependent phosphorylation of L-homoserine to L-homoserine phosphate. The sequence is that of Homoserine kinase from Saccharolobus islandicus (strain Y.N.15.51 / Yellowstone #2) (Sulfolobus islandicus).